The chain runs to 100 residues: Aspartyl/glutamyl-tRNA(Asn/Gln) amidotransferase subunit C (100 aa).

Belongs to the GatC family. As to quaternary structure, heterotrimer of A, B and C subunits.

It carries out the reaction L-glutamyl-tRNA(Gln) + L-glutamine + ATP + H2O = L-glutaminyl-tRNA(Gln) + L-glutamate + ADP + phosphate + H(+). It catalyses the reaction L-aspartyl-tRNA(Asn) + L-glutamine + ATP + H2O = L-asparaginyl-tRNA(Asn) + L-glutamate + ADP + phosphate + 2 H(+). Its function is as follows. Allows the formation of correctly charged Asn-tRNA(Asn) or Gln-tRNA(Gln) through the transamidation of misacylated Asp-tRNA(Asn) or Glu-tRNA(Gln) in organisms which lack either or both of asparaginyl-tRNA or glutaminyl-tRNA synthetases. The reaction takes place in the presence of glutamine and ATP through an activated phospho-Asp-tRNA(Asn) or phospho-Glu-tRNA(Gln). The polypeptide is Aspartyl/glutamyl-tRNA(Asn/Gln) amidotransferase subunit C (Dictyoglomus thermophilum (strain ATCC 35947 / DSM 3960 / H-6-12)).